Here is a 213-residue protein sequence, read N- to C-terminus: Dimethylamine corrinoid protein (213 aa).

The B12-binding N-terminal domain maps to 1-90; it reads MSKEELLQEL…LMPEGASGSK (90 aa). Positions 91 to 213 constitute a B12-binding domain; it reads LGVIVNGTVE…AVAKAKELLA (123 aa). Position 104 (histidine 104) interacts with methylcob(III)alamin.

The protein belongs to the methylamine corrinoid protein family. In terms of assembly, copurifies with MtbA.

Its pathway is one-carbon metabolism; methanogenesis from dimethylamine. In terms of biological role, acts as a methyl group carrier between MtbB1 and MtbA. Binds 1 corrinoid cofactor per protein, is subsequently demethylated by MtbA. The sequence is that of Dimethylamine corrinoid protein from Methanosarcina barkeri.